Consider the following 417-residue polypeptide: Serpin A3-7 (417 aa).

The signal sequence occupies residues 1–25 (MRTERTSFLLALGLLVSGFCSRVHC). 4 N-linked (GlcNAc...) asparagine glycosylation sites follow: N103, N183, N221, and N267.

Belongs to the serpin family. Homodimer.

Its subcellular location is the cytoplasmic vesicle. It is found in the secretory vesicle. The protein localises to the chromaffin granule. The protein resides in the secreted. Serine protease inhibitor. The polypeptide is Serpin A3-7 (Bos taurus (Bovine)).